Here is a 458-residue protein sequence, read N- to C-terminus: Protein adenylyltransferase FICD (458 aa).

At 1–23 the chain is on the cytoplasmic side; sequence MILMPMASVVAVAEPKWVSVWGR. Residues 24–44 form a helical; Signal-anchor for type II membrane protein membrane-spanning segment; that stretch reads FLWMTLLSMALGSLLALLLPL. The Lumenal segment spans residues 45 to 458; the sequence is GAVEEQCLAV…GFKETLPVRP (414 aa). Ser-79 bears the O-AMP-serine; by autocatalysis mark. Thr-80 is subject to O-AMP-threonine; by autocatalysis. TPR repeat units lie at residues 106-139 and 140-173; these read AKAA…DPGF and VDAL…SPFH. Thr-183 is subject to O-AMP-threonine; by autocatalysis. The short motif at 230 to 235 is the Inhibitory (S/T)XXXE(G/N) motif element; sequence TVAIEG. Residue Glu-234 participates in ATP binding. Asn-275 is a glycosylation site (N-linked (GlcNAc...) asparagine). Positions 285–420 constitute a Fido domain; it reads VTIDHMLEIH…VRPFIRFIAK (136 aa). 316 to 319 lines the ATP pocket; the sequence is VGHH. His-363 is an active-site residue. Residues 367–374, 399–400, and Asn-407 contribute to the ATP site; these read DGNGRTSR and YY.

Belongs to the fic family. In terms of assembly, homodimer. Interacts with HD. Mg(2+) is required as a cofactor. Requires Mn(2+) as cofactor. Post-translationally, auto-AMPylated in vitro.

It localises to the endoplasmic reticulum membrane. It catalyses the reaction L-tyrosyl-[protein] + ATP = O-(5'-adenylyl)-L-tyrosyl-[protein] + diphosphate. The enzyme catalyses 3-O-(5'-adenylyl)-L-threonyl-[protein] + H2O = L-threonyl-[protein] + AMP + H(+). The catalysed reaction is L-threonyl-[protein] + ATP = 3-O-(5'-adenylyl)-L-threonyl-[protein] + diphosphate. With respect to regulation, the side chain of Glu-234 determines which of the two opposing activities (AMPylase or de-AMPylase) will take place. In response to endoplasmic reticulum stress, mediates de-AMPylase activity. Adenylyltransferase activity is inhibited by the inhibitory helix present at the N-terminus: Glu-234 binds ATP and competes with ATP-binding at Arg-374, thereby preventing adenylyltransferase activity. In unstressed cells, disengagement of Glu-234 promotes adenylyltransferase activity. Activation dissociates ATP-binding from Glu-234, allowing ordered binding of the entire ATP moiety with the alpha-phosphate in an orientation that is productive for accepting an incoming target hydroxyl side chain. Its function is as follows. Protein that can both mediate the addition of adenosine 5'-monophosphate (AMP) to specific residues of target proteins (AMPylation), and the removal of the same modification from target proteins (de-AMPylation), depending on the context. The side chain of Glu-231 determines which of the two opposing activities (AMPylase or de-AMPylase) will take place. Acts as a key regulator of the ERN1/IRE1-mediated unfolded protein response (UPR) by mediating AMPylation or de-AMPylation of HSPA5/BiP. In unstressed cells, acts as an adenylyltransferase by mediating AMPylation of HSPA5/BiP at 'Thr-518', thereby inactivating it. In response to endoplasmic reticulum stress, acts as a phosphodiesterase by mediating removal of ATP (de-AMPylation) from HSPA5/BiP at 'Thr-518', leading to restore HSPA5/BiP activity. Although it is able to AMPylate RhoA, Rac and Cdc42 Rho GTPases in vitro, Rho GTPases do not constitute physiological substrates. The chain is Protein adenylyltransferase FICD from Rattus norvegicus (Rat).